Consider the following 397-residue polypeptide: B3 domain-containing protein At4g34400 (397 aa).

A DNA-binding region (TF-B3) is located at residues 14 to 107 (PRFFTVFVSH…IFEVSIFRGY (94 aa)). Residues 118-255 (ELEEEEEDSV…SSYAPDKEDT (138 aa)) are disordered. Residues 137-160 (TGAKSEMKNTVPEGRDKGKSKVEV) are compositionally biased toward basic and acidic residues. Acidic residues-rich tracts occupy residues 161–186 (VEDSDDDEEEDSVYSESSEETETDTD), 212–227 (SSDDEEDEEEDSDSDY), and 235–246 (DIEENSISEEDS).

The protein localises to the nucleus. The chain is B3 domain-containing protein At4g34400 from Arabidopsis thaliana (Mouse-ear cress).